The sequence spans 657 residues: Glycogen debranching enzyme (657 aa).

Aspartate 336 serves as the catalytic Nucleophile. Glutamate 371 functions as the Proton donor in the catalytic mechanism. Positions 460 to 479 (ANGEENRDGTNNNYSNNHGK) are disordered.

It belongs to the glycosyl hydrolase 13 family.

It carries out the reaction Hydrolysis of (1-&gt;6)-alpha-D-glucosidic linkages to branches with degrees of polymerization of three or four glucose residues in limit dextrin.. The protein operates within glycan degradation; glycogen degradation. Its function is as follows. Removes maltotriose and maltotetraose chains that are attached by 1,6-alpha-linkage to the limit dextrin main chain, generating a debranched limit dextrin. The protein is Glycogen debranching enzyme of Escherichia coli O6:K15:H31 (strain 536 / UPEC).